The sequence spans 475 residues: Squamosa promoter-binding-like protein 12 (475 aa).

A disordered region spans residues N49–S73. Low complexity predominate over residues G51–S73. Residues S177 to P254 form an SBP-type zinc finger. Positions 180, 185, 202, 205, 221, 224, 228, and 240 each coordinate Zn(2+). Positions K237 to K253 match the Bipartite nuclear localization signal motif. The interval G437 to H475 is disordered. Residues N465–H475 are compositionally biased toward polar residues.

In terms of tissue distribution, expressed in young panicles.

It localises to the nucleus. Its function is as follows. Trans-acting factor that binds specifically to the consensus nucleotide sequence 5'-TNCGTACAA-3'. May be involved in panicle development. The sequence is that of Squamosa promoter-binding-like protein 12 (SPL12) from Oryza sativa subsp. japonica (Rice).